The sequence spans 357 residues: 3-dehydroquinate synthase (357 aa).

NAD(+) is bound by residues 104–108 (GVVGD), 128–129 (TT), Lys141, and 168–171 (FLET). Zn(2+) contacts are provided by Glu183, His243, and His260.

Belongs to the sugar phosphate cyclases superfamily. Dehydroquinate synthase family. Requires NAD(+) as cofactor. It depends on Co(2+) as a cofactor. Zn(2+) serves as cofactor.

It is found in the cytoplasm. It catalyses the reaction 7-phospho-2-dehydro-3-deoxy-D-arabino-heptonate = 3-dehydroquinate + phosphate. It participates in metabolic intermediate biosynthesis; chorismate biosynthesis; chorismate from D-erythrose 4-phosphate and phosphoenolpyruvate: step 2/7. Functionally, catalyzes the conversion of 3-deoxy-D-arabino-heptulosonate 7-phosphate (DAHP) to dehydroquinate (DHQ). The sequence is that of 3-dehydroquinate synthase from Streptococcus pyogenes serotype M18 (strain MGAS8232).